Consider the following 429-residue polypeptide: Phosphoglucosamine mutase (429 aa).

Serine 96 acts as the Phosphoserine intermediate in catalysis. Residues serine 96, aspartate 230, aspartate 232, and aspartate 234 each contribute to the Mg(2+) site. The residue at position 96 (serine 96) is a Phosphoserine.

Belongs to the phosphohexose mutase family. Mg(2+) is required as a cofactor. Post-translationally, activated by phosphorylation.

The catalysed reaction is alpha-D-glucosamine 1-phosphate = D-glucosamine 6-phosphate. Catalyzes the conversion of glucosamine-6-phosphate to glucosamine-1-phosphate. The sequence is that of Phosphoglucosamine mutase from Thermotoga petrophila (strain ATCC BAA-488 / DSM 13995 / JCM 10881 / RKU-1).